The chain runs to 337 residues: MYLIYYYTIIAVATASIANEKIFYDIDSASVYYENFIKQHNKEYTTPDQRDAAFVNFKRNLADMNAMNNVSNQAVYGINKFSDIDKITFVNEHAGLVSNLINSTDSNFDPYRLCEYVTVAGPSARTPESFDWRKLNKVTKVKEQGVCGSCWAFAAIGNIESQYAIMHDSLIDLSEQQLLDCDRVDQGCDGGLMHLAFQEIIRIGGVEHEIDYPYQGIEYACRLAPSKLAVRLSHCYQYDLRDERKLLELLYKNGPIAVAIDCVDIIDYRSGIATVCNDNGLNHAVLLVGYGIENDTPYWIFKNSWGSNWGENGYFRARRNINACGMLNEFAASAVLL.

Positions 1–18 are cleaved as a signal peptide; that stretch reads MYLIYYYTIIAVATASIA. Residues 19–126 constitute a propeptide, activation peptide; that stretch reads NEKIFYDIDS…VTVAGPSART (108 aa). 3 disulfide bridges follow: Cys-147–Cys-188, Cys-181–Cys-221, and Cys-276–Cys-324. Cys-150 is a catalytic residue. Residues His-283 and Asn-303 contribute to the active site.

This sequence belongs to the peptidase C1 family. Synthesized as an inactive proenzyme and activated by proteolytic removal of the inhibitory propeptide.

The enzyme catalyses Endopeptidase of broad specificity, hydrolyzing substrates of both cathepsin L and cathepsin B.. Cysteine protease that plays an essential role in host liquefaction to facilitate horizontal transmission of the virus. May participate in the degradation of foreign protein expressed by the baculovirus system. The chain is Viral cathepsin (VCATH) from Spodoptera litura multicapsid nucleopolyhedrovirus (SpltMNPV).